The sequence spans 556 residues: MQFSIFAQTCAALEAQNGRLEMKHAISVILPSLSGEDLPIFIRFLMGKIFPDWSPQKLGIGPNLLYEAVAYVAGTKKTALVDLINRTGDAGLAIEQFLATKEQTAFFTEDPSLAEVYAACTRIAASAGGRSQRERLLVLRQLFGNVSPFEARYLARLILGELRIGIGEGTVRDAIAEAYTVEPAQVEHAMQALNDLGEVALRAREGEEGLIHLSIAPFRPVKMMLAQAGTTIPEMLAAHGEVAVEFKYDGTRFQFHKEGKTCRIYSRKLEEVTDAVPEVGEALLGATDHDVILDGEVIAIGADGRPLPFQTVLRRFRRKHGIAAAREAITLVPRVFDILYRDGETLIDLPFQSRRAILSATIGPEYLAPQQVLSSAEAVDLLYLEAMAEGHEGVMLKDLLSLYSPGVRGKHWVKIKPEVETLDLVVIGAEWGEGRRARTFGSFLLACLDQGVFRAVSKVATGISDEQLQELYTLFKDQVIAESGNTVTFEPTVIFEVGYAEIQKSPSYESGYALRFPRFVQVRDDKAVEEIETLESLTTRYLAQKTQANGQPEFTL.

Residue glutamate 245 participates in ATP binding. Catalysis depends on lysine 247, which acts as the N6-AMP-lysine intermediate. Residues arginine 252, arginine 267, glutamate 296, phenylalanine 336, arginine 408, and lysine 414 each contribute to the ATP site.

The protein belongs to the ATP-dependent DNA ligase family. Mg(2+) is required as a cofactor.

The catalysed reaction is ATP + (deoxyribonucleotide)n-3'-hydroxyl + 5'-phospho-(deoxyribonucleotide)m = (deoxyribonucleotide)n+m + AMP + diphosphate.. In terms of biological role, DNA ligase that seals nicks in double-stranded DNA during DNA replication, DNA recombination and DNA repair. The sequence is that of DNA ligase from Methanosphaerula palustris (strain ATCC BAA-1556 / DSM 19958 / E1-9c).